The following is an 839-amino-acid chain: Thymine dioxygenase JBP1 (839 aa).

Positions 86-288 are thymine dioxygenase; the sequence is KVCGVLIPKA…RLSCVFYYRA (203 aa). The Fe cation site is built by H213, D215, and H263. R279 is a binding site for 2-oxoglutarate. The segment at 415–583 is DNA-binding JBP1 domain; sequence KGDILNEAMN…EIEQARRRAP (169 aa).

Belongs to the TET family. JBP1 subfamily. In terms of assembly, monomer. Binds to DNA as a monomer. It depends on Fe(2+) as a cofactor.

The protein localises to the nucleus. The enzyme catalyses thymine + 2-oxoglutarate + O2 = 5-hydroxymethyluracil + succinate + CO2. Dioxygenase that catalyzes the first step of DNA base J (beta-d-glucosyl-HOMedU) biosynthesis by converting thymine to 5-hydroxymethyluracil (HOMedU). DNA base J is a hypermodified thymidine residue found in the genome of kinetoplastid parasites, which is localized primarily to repetitive DNA, namely the telomeres, and is implicated in the regulation of antigenic variation. Also specifically binds to base J-containing DNA (J-DNA). Involved in propagation and maintenance of DNA base J synthesis initiated by JBP2 by specifically binding already synthesized DNA base J and propagating J synthesis. Thymine dioxygenase activity and J-DNA-binding are independent functions. This chain is Thymine dioxygenase JBP1 (JBP1), found in Trypanosoma brucei brucei (strain 927/4 GUTat10.1).